Here is a 522-residue protein sequence, read N- to C-terminus: Insulinoma-associated protein 1 (522 aa).

Basic residues predominate over residues 1-12; the sequence is MPRGFLVKRSKK. Positions 1 to 20 are SNAG domain; that stretch reads MPRGFLVKRSKKSTPVSYRI. Disordered regions lie at residues 1–112 and 182–235; these read MPRG…SREH and AAEA…KPKA. Residues 2 to 7 form a required and sufficient for interaction with KDM1A region; sequence PRGFLV. A necessary for interaction with CCND1 region spans residues 43–57; that stretch reads PPAPGPGPVPGPLQP. Residues 43 to 61 show a composition bias toward pro residues; it reads PPAPGPGPVPGPLQPPPPT. Low complexity-rich tracts occupy residues 66–75 and 212–228; these read AALAAALACA and ASAAAAAEPPAKVAKAP. The C2H2-type 1; atypical zinc-finger motif lies at 277–297; the sequence is FICQLCKEEYADPFALAQHKC. Residues 305–327 form a C2H2-type 2 zinc finger; the sequence is YRCPECAKVFSCPANLASHRRWH. Positions 325–373 are disordered; it reads RWHKPRPAPAAARACEPETPARAEAREATGGGGSDRDTPSPGGVSESGS. Residues 339–351 show a composition bias toward basic and acidic residues; that stretch reads CEPETPARAEARE. 3 C2H2-type zinc fingers span residues 378 to 400, 453 to 476, and 481 to 504; these read YECHHCAKKFRRQAYLRKHLLAH, HLCPVCGETFPSKGAQERHLRLLH, and FPCKYCPATFYSSPGLTRHINKCH.

Belongs to the INSM1 family. In terms of assembly, interacts (via the N-terminal region) with CCND1 (via cyclin N-terminal domain); the interaction competes with the binding of CCND1 to CDK4 during cell cycle progression and increases its transcriptional repressor activity. Interacts with HDAC3; the interaction increases its transcriptional repressor activity. Interacts (via the SNAG domain) with HDAC1. Interacts (via the SNAG domain) with HDAC2. Interacts (via the SNAG domain) with KDM1A. Interacts (via the SNAG domain) with RCOR1. Interacts with SORBS1.

It is found in the nucleus. In terms of biological role, sequence-specific DNA-binding transcriptional regulator that plays a key role in neurogenesis and neuroendocrine cell differentiation during embryonic and/or fetal development. Binds to the consensus sequence 5'-[TG][TC][TC][TT][GA]GGG[CG]A-3' in target promoters. Acts as a transcriptional repressor of NEUROD1 and INS expression via its interaction with cyclin CCND1 in a cell cycle-independent manner. Negatively regulates skeletal muscle-specific gene expression in endocrine cells of the pituitary by inhibiting the Notch signaling pathway. Represses target gene transcription by recruiting chromatin-modifying factors, such as HDAC1, HDAC2, HDAC3, KDM1A and RCOR1 histone deacetylases. Binds to its own promoter, suggesting autoregulation as a self-control feedback mechanism. Competes with histone H3 for the same binding site on the histone demethylase complex formed by KDM1A and RCOR1, and thereby inhibits demethylation of histone H3 at 'Lys-4'. Promotes the generation and expansion of neuronal basal progenitor cells in the developing neocortex. Involved in the differentiation of endocrine cells of the developing anterior pituitary gland, of the pancreas and intestine, and of sympatho-adrenal cells in the peripheral nervous system. Promotes cell cycle signaling arrest and inhibition of cellular proliferation. This is Insulinoma-associated protein 1 (INSM1) from Bos taurus (Bovine).